A 317-amino-acid polypeptide reads, in one-letter code: Glucokinase (317 aa).

The protein belongs to the ROK (NagC/XylR) family. Homodimer. It depends on a divalent metal cation as a cofactor.

It catalyses the reaction D-glucose + ATP = D-glucose 6-phosphate + ADP + H(+). Catalyzes the phosphorylation of D-glucose to D-glucose 6-phosphate using ATP as the phosphate donor. Can also phosphorylate 2-deoxyglucose, with lower efficiency. ITP can also serve as a phosphoryl donor. The sequence is that of Glucokinase from Thermotoga maritima (strain ATCC 43589 / DSM 3109 / JCM 10099 / NBRC 100826 / MSB8).